We begin with the raw amino-acid sequence, 283 residues long: Thymidylate synthase (283 aa).

Arginine 22 lines the dUMP pocket. Cysteine 160 acts as the Nucleophile in catalysis. DUMP contacts are provided by residues 180–183 (RSCD), asparagine 191, and 221–223 (HIY). (6R)-5,10-methylene-5,6,7,8-tetrahydrofolate is bound at residue aspartate 183. (6R)-5,10-methylene-5,6,7,8-tetrahydrofolate is bound at residue serine 282.

It belongs to the thymidylate synthase family. Bacterial-type ThyA subfamily. Homodimer.

It is found in the cytoplasm. It catalyses the reaction dUMP + (6R)-5,10-methylene-5,6,7,8-tetrahydrofolate = 7,8-dihydrofolate + dTMP. It functions in the pathway pyrimidine metabolism; dTTP biosynthesis. Catalyzes the reductive methylation of 2'-deoxyuridine-5'-monophosphate (dUMP) to 2'-deoxythymidine-5'-monophosphate (dTMP) while utilizing 5,10-methylenetetrahydrofolate (mTHF) as the methyl donor and reductant in the reaction, yielding dihydrofolate (DHF) as a by-product. This enzymatic reaction provides an intracellular de novo source of dTMP, an essential precursor for DNA biosynthesis. The polypeptide is Thymidylate synthase (Shewanella halifaxensis (strain HAW-EB4)).